Consider the following 143-residue polypeptide: Nucleoside diphosphate kinase (143 aa).

6 residues coordinate ATP: Lys-11, Phe-59, Arg-87, Thr-93, Arg-104, and Asn-114. His-117 serves as the catalytic Pros-phosphohistidine intermediate.

It belongs to the NDK family. As to quaternary structure, homotetramer. It depends on Mg(2+) as a cofactor.

Its subcellular location is the cytoplasm. The enzyme catalyses a 2'-deoxyribonucleoside 5'-diphosphate + ATP = a 2'-deoxyribonucleoside 5'-triphosphate + ADP. It carries out the reaction a ribonucleoside 5'-diphosphate + ATP = a ribonucleoside 5'-triphosphate + ADP. Its function is as follows. Major role in the synthesis of nucleoside triphosphates other than ATP. The ATP gamma phosphate is transferred to the NDP beta phosphate via a ping-pong mechanism, using a phosphorylated active-site intermediate. The protein is Nucleoside diphosphate kinase of Shewanella sp. (strain MR-4).